A 187-amino-acid polypeptide reads, in one-letter code: Elongation factor P (187 aa).

Belongs to the elongation factor P family.

It is found in the cytoplasm. It functions in the pathway protein biosynthesis; polypeptide chain elongation. Involved in peptide bond synthesis. Stimulates efficient translation and peptide-bond synthesis on native or reconstituted 70S ribosomes in vitro. Probably functions indirectly by altering the affinity of the ribosome for aminoacyl-tRNA, thus increasing their reactivity as acceptors for peptidyl transferase. The polypeptide is Elongation factor P (Mycolicibacterium gilvum (strain PYR-GCK) (Mycobacterium gilvum (strain PYR-GCK))).